The sequence spans 287 residues: Elongation factor Ts (287 aa).

Residues 81–84 (TDFV) are involved in Mg(2+) ion dislocation from EF-Tu.

Belongs to the EF-Ts family.

It is found in the cytoplasm. In terms of biological role, associates with the EF-Tu.GDP complex and induces the exchange of GDP to GTP. It remains bound to the aminoacyl-tRNA.EF-Tu.GTP complex up to the GTP hydrolysis stage on the ribosome. The sequence is that of Elongation factor Ts from Nitratidesulfovibrio vulgaris (strain ATCC 29579 / DSM 644 / CCUG 34227 / NCIMB 8303 / VKM B-1760 / Hildenborough) (Desulfovibrio vulgaris).